We begin with the raw amino-acid sequence, 20 residues long: Hemocyanin subunit 6 (20 aa).

It belongs to the tyrosinase family. Hemocyanin subfamily. In terms of tissue distribution, hemolymph.

It localises to the secreted. The protein resides in the extracellular space. Its function is as follows. Hemocyanins are copper-containing oxygen carriers occurring freely dissolved in the hemolymph of many mollusks and arthropods. The chain is Hemocyanin subunit 6 from Homarus americanus (American lobster).